Consider the following 472-residue polypeptide: 3-isopropylmalate dehydratase large subunit (472 aa).

Residues C353, C414, and C417 each contribute to the [4Fe-4S] cluster site.

It belongs to the aconitase/IPM isomerase family. LeuC type 1 subfamily. As to quaternary structure, heterodimer of LeuC and LeuD. [4Fe-4S] cluster serves as cofactor.

It catalyses the reaction (2R,3S)-3-isopropylmalate = (2S)-2-isopropylmalate. It participates in amino-acid biosynthesis; L-leucine biosynthesis; L-leucine from 3-methyl-2-oxobutanoate: step 2/4. Catalyzes the isomerization between 2-isopropylmalate and 3-isopropylmalate, via the formation of 2-isopropylmaleate. In Psychrobacter arcticus (strain DSM 17307 / VKM B-2377 / 273-4), this protein is 3-isopropylmalate dehydratase large subunit.